The chain runs to 235 residues: Protocatechuate 3,4-dioxygenase beta chain (235 aa).

Residues tyrosine 107, tyrosine 146, histidine 159, and histidine 161 each contribute to the Fe cation site.

It belongs to the intradiol ring-cleavage dioxygenase family. In terms of assembly, the enzyme is an oligomer of 12 copies of the alpha and beta chains. Requires Fe(3+) as cofactor.

The enzyme catalyses 3,4-dihydroxybenzoate + O2 = 3-carboxy-cis,cis-muconate + 2 H(+). Its pathway is aromatic compound metabolism; beta-ketoadipate pathway; 3-carboxy-cis,cis-muconate from 3,4-dihydroxybenzoate: step 1/1. Functionally, plays an essential role in the utilization of numerous aromatic and hydroaromatic compounds via the beta-ketoadipate pathway. In Burkholderia cepacia (Pseudomonas cepacia), this protein is Protocatechuate 3,4-dioxygenase beta chain (pcaH).